Here is a 1374-residue protein sequence, read N- to C-terminus: DNA-directed RNA polymerase subunit beta (1374 aa).

It belongs to the RNA polymerase beta chain family. As to quaternary structure, the RNAP catalytic core consists of 2 alpha, 1 beta, 1 beta' and 1 omega subunit. When a sigma factor is associated with the core the holoenzyme is formed, which can initiate transcription.

The catalysed reaction is RNA(n) + a ribonucleoside 5'-triphosphate = RNA(n+1) + diphosphate. Its function is as follows. DNA-dependent RNA polymerase catalyzes the transcription of DNA into RNA using the four ribonucleoside triphosphates as substrates. The sequence is that of DNA-directed RNA polymerase subunit beta from Rhodopseudomonas palustris (strain BisB5).